Here is a 119-residue protein sequence, read N- to C-terminus: Large ribosomal subunit protein eL8 (119 aa).

This sequence belongs to the eukaryotic ribosomal protein eL8 family. In terms of assembly, part of the 50S ribosomal subunit. Probably part of the RNase P complex.

The protein resides in the cytoplasm. Multifunctional RNA-binding protein that recognizes the K-turn motif in ribosomal RNA, the RNA component of RNase P, box H/ACA, box C/D and box C'/D' sRNAs. This is Large ribosomal subunit protein eL8 from Archaeoglobus fulgidus (strain ATCC 49558 / DSM 4304 / JCM 9628 / NBRC 100126 / VC-16).